An 89-amino-acid polypeptide reads, in one-letter code: Small ribosomal subunit protein uS15 (89 aa).

This sequence belongs to the universal ribosomal protein uS15 family. Part of the 30S ribosomal subunit. Forms a bridge to the 50S subunit in the 70S ribosome, contacting the 23S rRNA.

Functionally, one of the primary rRNA binding proteins, it binds directly to 16S rRNA where it helps nucleate assembly of the platform of the 30S subunit by binding and bridging several RNA helices of the 16S rRNA. Forms an intersubunit bridge (bridge B4) with the 23S rRNA of the 50S subunit in the ribosome. This chain is Small ribosomal subunit protein uS15, found in Pseudomonas putida (Arthrobacter siderocapsulatus).